The following is a 224-amino-acid chain: Protein DCL, chloroplastic (224 aa).

A chloroplast-targeting transit peptide spans 1 to 50 (MASICTSNFHFLCRKNNSSPISHHLLLSPSSLSFSRCGGLRLCRCAAVKT). The disordered stretch occupies residues 76-98 (TTSESEELVKEESDDEVGKKSGD). Basic and acidic residues predominate over residues 82-98 (ELVKEESDDEVGKKSGD).

The protein resides in the plastid. Its subcellular location is the chloroplast. Has a function in the early stage of chloroplast development and palisade cell morphogenesis. Required for correct plastid ribosome assembly. Required for processing and maturation of 4.5S rRNA. This chain is Protein DCL, chloroplastic (DCL), found in Solanum lycopersicum (Tomato).